The following is an 862-amino-acid chain: DNA gyrase subunit A (862 aa).

One can recognise a Topo IIA-type catalytic domain in the interval 38–501 (LPDARDGLKP…DYDDIDVEDL (464 aa)). The active-site O-(5'-phospho-DNA)-tyrosine intermediate is Tyr126. Positions 528–534 (QKRGGKG) match the GyrA-box motif. The interval 843–862 (KEESDDDDIVADDTQEQDME) is disordered. Acidic residues predominate over residues 845 to 862 (ESDDDDIVADDTQEQDME).

It belongs to the type II topoisomerase GyrA/ParC subunit family. Heterotetramer, composed of two GyrA and two GyrB chains. In the heterotetramer, GyrA contains the active site tyrosine that forms a transient covalent intermediate with DNA, while GyrB binds cofactors and catalyzes ATP hydrolysis.

The protein localises to the cytoplasm. The catalysed reaction is ATP-dependent breakage, passage and rejoining of double-stranded DNA.. Functionally, a type II topoisomerase that negatively supercoils closed circular double-stranded (ds) DNA in an ATP-dependent manner to modulate DNA topology and maintain chromosomes in an underwound state. Negative supercoiling favors strand separation, and DNA replication, transcription, recombination and repair, all of which involve strand separation. Also able to catalyze the interconversion of other topological isomers of dsDNA rings, including catenanes and knotted rings. Type II topoisomerases break and join 2 DNA strands simultaneously in an ATP-dependent manner. The protein is DNA gyrase subunit A of Campylobacter fetus.